Reading from the N-terminus, the 382-residue chain is Mating-type protein a-1 (382 aa).

Positions I116 to R184 form a DNA-binding region, HMG box.

In terms of assembly, binds in vitro to DNA containing a specific core sequence 5'-CTTTG-3'.

Its subcellular location is the nucleus. In terms of biological role, mating type proteins are sequence specific DNA-binding proteins that act as master switches in yeast differentiation by controlling gene expression in a cell type-specific fashion. Transcriptional activator that induces the transcription of a-specific genes like mating factor mfa-1. Required for mating as an a-cell, blocking of heterokaryon formation (vegetative incompatibility) and for perithecium induction. The sequence is that of Mating-type protein a-1 (mta-1) from Neurospora crassa.